We begin with the raw amino-acid sequence, 78 residues long: MASVVIRNLSEATHNAIKFRARAAGRSTEAEIRLILDNIAKAQQTVRLGSMLASIGQEIGGVELEDVRGRNTDNEVSL.

In terms of assembly, homodimer in the absence of FitB; forms a heterodimer with FitB; 4 FitAB heterodimers form a complex that binds to fitAB promoter DNA. The complex is also seen in solution.

Its function is as follows. Antitoxin component of a type II toxin-antitoxin (TA) system. Plays a role in the speed with which bacteria traverse human epithelial cells; disruption of the locus increases the speed of trafficking about 2-4-fold. Binds to its own promoter, binding affinity of the FitAB complex is 20-30-fold higher than FitA alone. No nuclease activity was observed for the FitAB complex, perhaps because FitA (the antitoxin) prevents metal binding and thus catalysis by FitB. This chain is Antitoxin FitA (fitA), found in Neisseria gonorrhoeae (strain ATCC 700825 / FA 1090).